Here is a 424-residue protein sequence, read N- to C-terminus: Serine--tRNA ligase (424 aa).

231 to 233 serves as a coordination point for L-serine; the sequence is TAE. Residue 262-264 participates in ATP binding; that stretch reads RSE. Residue glutamate 285 coordinates L-serine. Residue 349 to 352 participates in ATP binding; sequence EISS. Residue serine 385 participates in L-serine binding.

This sequence belongs to the class-II aminoacyl-tRNA synthetase family. Type-1 seryl-tRNA synthetase subfamily. In terms of assembly, homodimer. The tRNA molecule binds across the dimer.

It localises to the cytoplasm. The catalysed reaction is tRNA(Ser) + L-serine + ATP = L-seryl-tRNA(Ser) + AMP + diphosphate + H(+). It carries out the reaction tRNA(Sec) + L-serine + ATP = L-seryl-tRNA(Sec) + AMP + diphosphate + H(+). The protein operates within aminoacyl-tRNA biosynthesis; selenocysteinyl-tRNA(Sec) biosynthesis; L-seryl-tRNA(Sec) from L-serine and tRNA(Sec): step 1/1. In terms of biological role, catalyzes the attachment of serine to tRNA(Ser). Is also able to aminoacylate tRNA(Sec) with serine, to form the misacylated tRNA L-seryl-tRNA(Sec), which will be further converted into selenocysteinyl-tRNA(Sec). This Bacillus cereus (strain ZK / E33L) protein is Serine--tRNA ligase.